Consider the following 445-residue polypeptide: Bifunctional protein GlmU (445 aa).

The segment at 1–218 (MRALVLAAGK…LLEITGVNTR (218 aa)) is pyrophosphorylase. Residues 6-9 (LAAG), K20, Q69, 74-75 (GT), 96-98 (YGD), G134, E147, N162, and N216 each bind UDP-N-acetyl-alpha-D-glucosamine. D98 contacts Mg(2+). N216 contacts Mg(2+). The linker stretch occupies residues 219–239 (KTLVWLEEQLRMRKIEELLEN). The tract at residues 240 to 445 (GVTILDPATT…GWVLKKRKEE (206 aa)) is N-acetyltransferase. UDP-N-acetyl-alpha-D-glucosamine contacts are provided by R321 and K339. H351 acts as the Proton acceptor in catalysis. Y354 and N365 together coordinate UDP-N-acetyl-alpha-D-glucosamine. Acetyl-CoA contacts are provided by residues A368, 374–375 (NY), S393, A411, and R428.

The protein in the N-terminal section; belongs to the N-acetylglucosamine-1-phosphate uridyltransferase family. It in the C-terminal section; belongs to the transferase hexapeptide repeat family. Homotrimer. The cofactor is Mg(2+).

It localises to the cytoplasm. It catalyses the reaction alpha-D-glucosamine 1-phosphate + acetyl-CoA = N-acetyl-alpha-D-glucosamine 1-phosphate + CoA + H(+). The catalysed reaction is N-acetyl-alpha-D-glucosamine 1-phosphate + UTP + H(+) = UDP-N-acetyl-alpha-D-glucosamine + diphosphate. The protein operates within nucleotide-sugar biosynthesis; UDP-N-acetyl-alpha-D-glucosamine biosynthesis; N-acetyl-alpha-D-glucosamine 1-phosphate from alpha-D-glucosamine 6-phosphate (route II): step 2/2. It functions in the pathway nucleotide-sugar biosynthesis; UDP-N-acetyl-alpha-D-glucosamine biosynthesis; UDP-N-acetyl-alpha-D-glucosamine from N-acetyl-alpha-D-glucosamine 1-phosphate: step 1/1. It participates in bacterial outer membrane biogenesis; LPS lipid A biosynthesis. Functionally, catalyzes the last two sequential reactions in the de novo biosynthetic pathway for UDP-N-acetylglucosamine (UDP-GlcNAc). The C-terminal domain catalyzes the transfer of acetyl group from acetyl coenzyme A to glucosamine-1-phosphate (GlcN-1-P) to produce N-acetylglucosamine-1-phosphate (GlcNAc-1-P), which is converted into UDP-GlcNAc by the transfer of uridine 5-monophosphate (from uridine 5-triphosphate), a reaction catalyzed by the N-terminal domain. The protein is Bifunctional protein GlmU of Thermotoga sp. (strain RQ2).